We begin with the raw amino-acid sequence, 402 residues long: 1-deoxy-D-xylulose 5-phosphate reductoisomerase (402 aa).

Residues threonine 21, glycine 22, serine 23, isoleucine 24, glycine 47, asparagine 50, and asparagine 127 each coordinate NADPH. Position 128 (lysine 128) interacts with 1-deoxy-D-xylulose 5-phosphate. An NADPH-binding site is contributed by glutamate 129. Position 151 (aspartate 151) interacts with Mn(2+). Residues serine 152, glutamate 153, serine 177, and histidine 200 each coordinate 1-deoxy-D-xylulose 5-phosphate. Glutamate 153 contacts Mn(2+). Glycine 206 is a binding site for NADPH. 1-deoxy-D-xylulose 5-phosphate is bound by residues serine 213, asparagine 218, lysine 219, and glutamate 222. Residue glutamate 222 coordinates Mn(2+).

The protein belongs to the DXR family. Mg(2+) is required as a cofactor. The cofactor is Mn(2+).

The catalysed reaction is 2-C-methyl-D-erythritol 4-phosphate + NADP(+) = 1-deoxy-D-xylulose 5-phosphate + NADPH + H(+). It functions in the pathway isoprenoid biosynthesis; isopentenyl diphosphate biosynthesis via DXP pathway; isopentenyl diphosphate from 1-deoxy-D-xylulose 5-phosphate: step 1/6. In terms of biological role, catalyzes the NADPH-dependent rearrangement and reduction of 1-deoxy-D-xylulose-5-phosphate (DXP) to 2-C-methyl-D-erythritol 4-phosphate (MEP). The sequence is that of 1-deoxy-D-xylulose 5-phosphate reductoisomerase from Mycobacterium ulcerans (strain Agy99).